The chain runs to 363 residues: UDP-N-acetylglucosamine--N-acetylmuramyl-(pentapeptide) pyrophosphoryl-undecaprenol N-acetylglucosamine transferase (363 aa).

UDP-N-acetyl-alpha-D-glucosamine contacts are provided by residues 10–12 (TGG), asparagine 124, serine 195, isoleucine 248, and glutamine 293.

It belongs to the glycosyltransferase 28 family. MurG subfamily.

It is found in the cell membrane. It catalyses the reaction Mur2Ac(oyl-L-Ala-gamma-D-Glu-L-Lys-D-Ala-D-Ala)-di-trans,octa-cis-undecaprenyl diphosphate + UDP-N-acetyl-alpha-D-glucosamine = beta-D-GlcNAc-(1-&gt;4)-Mur2Ac(oyl-L-Ala-gamma-D-Glu-L-Lys-D-Ala-D-Ala)-di-trans,octa-cis-undecaprenyl diphosphate + UDP + H(+). It functions in the pathway cell wall biogenesis; peptidoglycan biosynthesis. In terms of biological role, cell wall formation. Catalyzes the transfer of a GlcNAc subunit on undecaprenyl-pyrophosphoryl-MurNAc-pentapeptide (lipid intermediate I) to form undecaprenyl-pyrophosphoryl-MurNAc-(pentapeptide)GlcNAc (lipid intermediate II). In Lacticaseibacillus casei (strain BL23) (Lactobacillus casei), this protein is UDP-N-acetylglucosamine--N-acetylmuramyl-(pentapeptide) pyrophosphoryl-undecaprenol N-acetylglucosamine transferase.